A 380-amino-acid polypeptide reads, in one-letter code: Cytochrome b (380 aa).

4 helical membrane-spanning segments follow: residues 34–54, 78–99, 114–134, and 179–199; these read YGSLLGLCLMTQILTGLFLAM, WLMRNIHANGASFFFICIYLHI, WNIGVILLLLVMATAFVGYVL, and FFTFHFLLPFLIAGTSMLHLL. Residues His84 and His98 each coordinate heme b. The heme b site is built by His183 and His197. Position 202 (His202) interacts with a ubiquinone. A run of 4 helical transmembrane segments spans residues 227 to 247, 289 to 309, 321 to 341, and 348 to 368; these read YKDTFGFMIMLAALALLSTTN, LGGVLALLFSIMILMLIPSLH, LSQLMFWSIIANTLVLTWIGG, and FILIGQISSALYFILFLVLLP.

The protein belongs to the cytochrome b family. As to quaternary structure, the cytochrome bc1 complex contains 3 respiratory subunits (MT-CYB, CYC1 and UQCRFS1), 2 core proteins (UQCRC1 and UQCRC2) and probably 6 low-molecular weight proteins. It depends on heme b as a cofactor.

The protein localises to the mitochondrion inner membrane. Component of the ubiquinol-cytochrome c reductase complex (complex III or cytochrome b-c1 complex) that is part of the mitochondrial respiratory chain. The b-c1 complex mediates electron transfer from ubiquinol to cytochrome c. Contributes to the generation of a proton gradient across the mitochondrial membrane that is then used for ATP synthesis. The chain is Cytochrome b (mt-cyb) from Typhlonectes natans (Rubber eel).